The chain runs to 154 residues: Endoribonuclease YbeY (154 aa).

Residues H116, H120, and H126 each contribute to the Zn(2+) site.

This sequence belongs to the endoribonuclease YbeY family. The cofactor is Zn(2+).

It localises to the cytoplasm. In terms of biological role, single strand-specific metallo-endoribonuclease involved in late-stage 70S ribosome quality control and in maturation of the 3' terminus of the 16S rRNA. The chain is Endoribonuclease YbeY from Chromohalobacter salexigens (strain ATCC BAA-138 / DSM 3043 / CIP 106854 / NCIMB 13768 / 1H11).